The chain runs to 273 residues: MPEMPEVENVRATLQELVPGKKIDQVIVRVPKMIVSTPPDEFVHMLVGQEIEGVRRRGKFLLFDLTNCTILSHLRMEGKFRLMDEKEEVSKHTHIIFHFEDHTELRFLDVRKFGTMEVTNKYGEGETRSIKKLGPEPLTQAFTSTDFATGVKKTSRAIKTALLDQKLVAGVGNIYADEICFEAKVRPERAANSLSDKEIKRIFEATKSIMTEAVALGGSTVRTYVNSQGKLGQYQDKLKVYGKTDEPCVVCGKPIEKIKLNGRGTHFCPNCQK.

The Schiff-base intermediate with DNA role is filled by proline 2. The active-site Proton donor is glutamate 3. Lysine 59 serves as the catalytic Proton donor; for beta-elimination activity. The DNA site is built by histidine 92 and arginine 111. Residues 239-273 form an FPG-type zinc finger; sequence KVYGKTDEPCVVCGKPIEKIKLNGRGTHFCPNCQK. The Proton donor; for delta-elimination activity role is filled by arginine 263.

It belongs to the FPG family. Monomer. The cofactor is Zn(2+).

It catalyses the reaction Hydrolysis of DNA containing ring-opened 7-methylguanine residues, releasing 2,6-diamino-4-hydroxy-5-(N-methyl)formamidopyrimidine.. It carries out the reaction 2'-deoxyribonucleotide-(2'-deoxyribose 5'-phosphate)-2'-deoxyribonucleotide-DNA = a 3'-end 2'-deoxyribonucleotide-(2,3-dehydro-2,3-deoxyribose 5'-phosphate)-DNA + a 5'-end 5'-phospho-2'-deoxyribonucleoside-DNA + H(+). Functionally, involved in base excision repair of DNA damaged by oxidation or by mutagenic agents. Acts as a DNA glycosylase that recognizes and removes damaged bases. Has a preference for oxidized purines, such as 7,8-dihydro-8-oxoguanine (8-oxoG). Has AP (apurinic/apyrimidinic) lyase activity and introduces nicks in the DNA strand. Cleaves the DNA backbone by beta-delta elimination to generate a single-strand break at the site of the removed base with both 3'- and 5'-phosphates. The chain is Formamidopyrimidine-DNA glycosylase from Listeria monocytogenes serotype 4b (strain F2365).